A 585-amino-acid polypeptide reads, in one-letter code: Regulator of gene activity (585 aa).

Positions 42–56 are enriched in polar residues; the sequence is FQTDFANSYPGTANY. Disordered stretches follow at residues 42 to 93, 148 to 191, and 349 to 394; these read FQTD…GNRN, GGGG…PGSK, and GVGG…KVTN. A compositionally biased stretch (low complexity) spans 58 to 71; it reads QAPQQQQQQQQQPQ. Residues 166–184 show a composition bias toward polar residues; that stretch reads PSLTNARGQNDQTLPQSNP. Residues 349–367 are compositionally biased toward gly residues; it reads GVGGGLGSGSGSSGSGAGG. The segment covering 372–388 has biased composition (polar residues); it reads DNSSNDKLVKSGVQTSP.

This sequence belongs to the CNOT2/3/5 family. As to quaternary structure, component of the CCR4-NOT complex composed of at least Pop2/Caf1-55, Ccr4, Not1, Rga/Not2, and Not3. In terms of tissue distribution, expressed in heterogeneous levels between adjacent germline stem cells (at protein level).

The protein resides in the cytoplasm. Its function is as follows. Component of the CCR4-NOT complex which is one of the major cellular mRNA deadenylases and is linked to various cellular processes including bulk mRNA degradation, miRNA-mediated repression, translational repression during translational initiation and general transcription regulation. Additional complex functions may be a consequence of its influence on mRNA expression. Essential for viability. Acts as a suppressor of position effect variegation (PEV) at the white locus and regulates the expression of several unrelated genes. Plays a role in germline stem cell differentiation in the ovaries. The chain is Regulator of gene activity from Drosophila melanogaster (Fruit fly).